The following is a 468-amino-acid chain: Glutamate--tRNA ligase (468 aa).

A 'HIGH' region motif is present at residues 8 to 18 (PSPTGFLHVGG). Residues Cys-97, Cys-99, Cys-124, and Asp-126 each coordinate Zn(2+). A 'KMSKS' region motif is present at residues 236–240 (KLSKR). An ATP-binding site is contributed by Lys-239.

Belongs to the class-I aminoacyl-tRNA synthetase family. Glutamate--tRNA ligase type 1 subfamily. Monomer. It depends on Zn(2+) as a cofactor.

Its subcellular location is the cytoplasm. It catalyses the reaction tRNA(Glu) + L-glutamate + ATP = L-glutamyl-tRNA(Glu) + AMP + diphosphate. Its function is as follows. Catalyzes the attachment of glutamate to tRNA(Glu) in a two-step reaction: glutamate is first activated by ATP to form Glu-AMP and then transferred to the acceptor end of tRNA(Glu). The protein is Glutamate--tRNA ligase of Francisella tularensis subsp. tularensis (strain SCHU S4 / Schu 4).